The primary structure comprises 179 residues: Large ribosomal subunit protein uL6 (179 aa).

Belongs to the universal ribosomal protein uL6 family. As to quaternary structure, part of the 50S ribosomal subunit.

Its function is as follows. This protein binds to the 23S rRNA, and is important in its secondary structure. It is located near the subunit interface in the base of the L7/L12 stalk, and near the tRNA binding site of the peptidyltransferase center. The polypeptide is Large ribosomal subunit protein uL6 (Prochlorococcus marinus (strain MIT 9515)).